A 118-amino-acid chain; its full sequence is MSITSLKNQKEFELINKLGKKFHERYFILVIAKNLPKIFLETKYNIFLGIKVSKKLNKKAVVRNKIKRRIRHLIRMNVSDSKLKAIKLAMIIIPRKGFEEINFSHLNDELSNIILKNI.

It belongs to the RnpA family. As to quaternary structure, consists of a catalytic RNA component (M1 or rnpB) and a protein subunit.

It catalyses the reaction Endonucleolytic cleavage of RNA, removing 5'-extranucleotides from tRNA precursor.. In terms of biological role, RNaseP catalyzes the removal of the 5'-leader sequence from pre-tRNA to produce the mature 5'-terminus. It can also cleave other RNA substrates such as 4.5S RNA. The protein component plays an auxiliary but essential role in vivo by binding to the 5'-leader sequence and broadening the substrate specificity of the ribozyme. In Rickettsia canadensis (strain McKiel), this protein is Ribonuclease P protein component.